A 149-amino-acid chain; its full sequence is Pleckstrin homology domain-containing family J member 1 (149 aa).

The PH domain occupies 15–108; the sequence is PAEKAAEILM…WIEALKRASY (94 aa).

The chain is Pleckstrin homology domain-containing family J member 1 (PLEKHJ1) from Gallus gallus (Chicken).